The primary structure comprises 524 residues: Protein MGF 505-2R (524 aa).

Belongs to the asfivirus MGF 505 family.

Plays a role in virus cell tropism, and may be required for efficient virus replication in macrophages. The sequence is that of Protein MGF 505-2R from Ornithodoros (relapsing fever ticks).